An 863-amino-acid chain; its full sequence is Oleate activated transcription factor 3 (863 aa).

The zn(2)-C6 fungal-type DNA-binding region spans 19-47; sequence CTNCKKRKSKCDRTKPCGTCVRLGDVDSC. The span at 52 to 63 shows a compositional bias: polar residues; sequence DSSGQPESSPSL. Positions 52 to 81 are disordered; the sequence is DSSGQPESSPSLNDADPLRKQSTPAERISP.

This sequence belongs to the OAF3 family.

It localises to the cytoplasm. The protein localises to the nucleus. Its subcellular location is the mitochondrion. In terms of biological role, transcriptional inhibitor with a significantly increased number of target genes in response to oleate. The sequence is that of Oleate activated transcription factor 3 (OAF3) from Saccharomyces cerevisiae (strain RM11-1a) (Baker's yeast).